The following is an 813-amino-acid chain: Glycerol-3-phosphate acyltransferase (813 aa).

The HXXXXD motif signature appears at 304-309; sequence CHRSHI.

This sequence belongs to the GPAT/DAPAT family.

The protein localises to the cell inner membrane. It carries out the reaction sn-glycerol 3-phosphate + an acyl-CoA = a 1-acyl-sn-glycero-3-phosphate + CoA. It participates in phospholipid metabolism; CDP-diacylglycerol biosynthesis; CDP-diacylglycerol from sn-glycerol 3-phosphate: step 1/3. This Actinobacillus succinogenes (strain ATCC 55618 / DSM 22257 / CCUG 43843 / 130Z) protein is Glycerol-3-phosphate acyltransferase.